Reading from the N-terminus, the 359-residue chain is tRNA-specific 2-thiouridylase MnmA (359 aa).

ATP contacts are provided by residues G7 to S14 and L33. The Nucleophile role is filled by C94. C94 and C193 form a disulfide bridge. Residue G119 participates in ATP binding. The segment at K143–Q145 is interaction with tRNA. The Cysteine persulfide intermediate role is filled by C193. The interaction with tRNA stretch occupies residues R298 to Y299.

This sequence belongs to the MnmA/TRMU family.

It localises to the cytoplasm. The enzyme catalyses S-sulfanyl-L-cysteinyl-[protein] + uridine(34) in tRNA + AH2 + ATP = 2-thiouridine(34) in tRNA + L-cysteinyl-[protein] + A + AMP + diphosphate + H(+). Its function is as follows. Catalyzes the 2-thiolation of uridine at the wobble position (U34) of tRNA, leading to the formation of s(2)U34. This Trichodesmium erythraeum (strain IMS101) protein is tRNA-specific 2-thiouridylase MnmA.